We begin with the raw amino-acid sequence, 180 residues long: Early nodulin-16 (180 aa).

Residues 1 to 22 (MASSSPILLMIIFSMWLLISHS) form the signal peptide. The Phytocyanin domain occupies 25 to 129 (TDYLIGDSHN…GLKLAVVVQN (105 aa)). The N-linked (GlcNAc...) asparagine glycan is linked to Asn-67. The cysteines at positions 83 and 117 are disulfide-linked. N-linked (GlcNAc...) asparagine glycosylation is present at Asn-152. Ser-154 is lipidated: GPI-anchor amidated serine. The propeptide at 155–180 (GNKGGAAGLGFIMWLGVSLVMMMFLI) is removed in mature form.

This sequence belongs to the early nodulin-like (ENODL) family. As to expression, expressed in developing nodules upon symbiosis with Sinorhizobium meliloti.

The protein resides in the symbiosome. Its subcellular location is the cell membrane. In terms of biological role, may act as a carbohydrate transporter. The chain is Early nodulin-16 from Medicago truncatula (Barrel medic).